A 260-amino-acid chain; its full sequence is UPF0246 protein APP7_0648 (260 aa).

This sequence belongs to the UPF0246 family.

This is UPF0246 protein APP7_0648 from Actinobacillus pleuropneumoniae serotype 7 (strain AP76).